The following is a 659-amino-acid chain: Threonine--tRNA ligase (659 aa).

The 64-residue stretch at 7 to 70 (VQATVTVTFP…TDDATVEIIT (64 aa)) folds into the TGS domain. Positions 255–557 (DHRKLGAELE…LIEHTAGNFP (303 aa)) are catalytic. The Zn(2+) site is built by Cys353, His404, and His534.

The protein belongs to the class-II aminoacyl-tRNA synthetase family. In terms of assembly, homodimer. Zn(2+) is required as a cofactor.

It is found in the cytoplasm. It catalyses the reaction tRNA(Thr) + L-threonine + ATP = L-threonyl-tRNA(Thr) + AMP + diphosphate + H(+). Functionally, catalyzes the attachment of threonine to tRNA(Thr) in a two-step reaction: L-threonine is first activated by ATP to form Thr-AMP and then transferred to the acceptor end of tRNA(Thr). Also edits incorrectly charged L-seryl-tRNA(Thr). In Chlorobium phaeobacteroides (strain BS1), this protein is Threonine--tRNA ligase.